The chain runs to 512 residues: Maturase K (512 aa).

It belongs to the intron maturase 2 family. MatK subfamily.

The protein localises to the plastid. It localises to the chloroplast. Functionally, usually encoded in the trnK tRNA gene intron. Probably assists in splicing its own and other chloroplast group II introns. This is Maturase K from Wolffiella gladiata (Florida mud-midget).